Reading from the N-terminus, the 152-residue chain is Mediator of RNA polymerase II transcription subunit 9 (152 aa).

Positions 98-150 (IKRCKALLQENEEVRNLLANSIEEWENIIADKEQQLRVKAKVLRDLDARIEKI) form a coiled coil.

This sequence belongs to the Mediator complex subunit 9 family. As to quaternary structure, component of the Mediator complex.

It is found in the nucleus. Component of the Mediator complex, a coactivator involved in the regulated transcription of nearly all RNA polymerase II-dependent genes. Mediator functions as a bridge to convey information from gene-specific regulatory proteins to the basal RNA polymerase II transcription machinery. Mediator is recruited to promoters by direct interactions with regulatory proteins and serves as a scaffold for the assembly of a functional preinitiation complex with RNA polymerase II and the general transcription factors. This Candida glabrata (strain ATCC 2001 / BCRC 20586 / JCM 3761 / NBRC 0622 / NRRL Y-65 / CBS 138) (Yeast) protein is Mediator of RNA polymerase II transcription subunit 9 (CSE2).